The sequence spans 206 residues: LexA repressor (206 aa).

Residues 28–48 (VREIGQAVGLASSSTVHGHLS) constitute a DNA-binding region (H-T-H motif). Active-site for autocatalytic cleavage activity residues include serine 128 and lysine 166.

It belongs to the peptidase S24 family. In terms of assembly, homodimer.

The catalysed reaction is Hydrolysis of Ala-|-Gly bond in repressor LexA.. In terms of biological role, represses a number of genes involved in the response to DNA damage (SOS response), including recA and lexA. In the presence of single-stranded DNA, RecA interacts with LexA causing an autocatalytic cleavage which disrupts the DNA-binding part of LexA, leading to derepression of the SOS regulon and eventually DNA repair. The polypeptide is LexA repressor (Bacillus thuringiensis (strain Al Hakam)).